Consider the following 597-residue polypeptide: Intrastrand cross-link recognition protein (597 aa).

Polar residues predominate over residues 1–28 (MNTGISPKQDDASNSNLLNIGQDHSLQY). Disordered regions lie at residues 1–134 (MNTG…NVNA), 174–212 (QTNPSVTGTGASSNNNSNNNNVSSGNNSTSSNPAQLAAS), 259–291 (SAGNAAGNANTATHPGLLPPNLQPQLTHHQQQM), and 327–364 (HLQQQQQQQQHPVVKKLSSTQSRIERRKQLKKQGPKRP). Over residues 32–42 (EHNDSQYRDAS) the composition is skewed to basic and acidic residues. 5 stretches are compositionally biased toward low complexity: residues 52–134 (QFQA…NVNA), 178–212 (SVTGTGASSNNNSNNNNVSSGNNSTSSNPAQLAAS), 260–271 (AGNAAGNANTAT), 281–291 (QPQLTHHQQQM), and 327–337 (HLQQQQQQQQH). Residues 351 to 361 (ERRKQLKKQGP) show a composition bias toward basic residues. 2 DNA-binding regions (HMG box) span residues 361-429 (PKRP…DAYE) and 434-502 (PKRP…PDEN). Phosphoserine is present on Ser-532. Composition is skewed to low complexity over residues 543–556 (SVTGSNSNSTNPNT) and 564–580 (LQQQPLQQQQQQQQQQQ). The tract at residues 543–597 (SVTGSNSNSTNPNTPVSPPISLQQQPLQQQQQQQQQQQHMLLADPTTNGSIIKNE) is disordered. A compositionally biased stretch (polar residues) spans 587–597 (PTTNGSIIKNE).

It is found in the nucleus. Functionally, binds to platinated DNA and confers sensitivity to the anticancer drug cisplatin. Activate the expression of the COX5B gene. The protein is Intrastrand cross-link recognition protein (IXR1) of Saccharomyces cerevisiae (strain ATCC 204508 / S288c) (Baker's yeast).